A 339-amino-acid chain; its full sequence is Uroporphyrinogen decarboxylase (339 aa).

Substrate is bound by residues 23–27 (RQAGR), Asp-72, Tyr-147, Thr-202, and His-315.

It belongs to the uroporphyrinogen decarboxylase family. As to quaternary structure, homodimer.

The protein localises to the cytoplasm. The catalysed reaction is uroporphyrinogen III + 4 H(+) = coproporphyrinogen III + 4 CO2. Its pathway is porphyrin-containing compound metabolism; protoporphyrin-IX biosynthesis; coproporphyrinogen-III from 5-aminolevulinate: step 4/4. Catalyzes the decarboxylation of four acetate groups of uroporphyrinogen-III to yield coproporphyrinogen-III. The chain is Uroporphyrinogen decarboxylase from Geotalea daltonii (strain DSM 22248 / JCM 15807 / FRC-32) (Geobacter daltonii).